The primary structure comprises 204 residues: Peptide deformylase (204 aa).

Fe cation is bound by residues Cys-131 and His-174. Glu-175 is a catalytic residue. His-178 lines the Fe cation pocket.

The protein belongs to the polypeptide deformylase family. Fe(2+) serves as cofactor.

The enzyme catalyses N-terminal N-formyl-L-methionyl-[peptide] + H2O = N-terminal L-methionyl-[peptide] + formate. Removes the formyl group from the N-terminal Met of newly synthesized proteins. Requires at least a dipeptide for an efficient rate of reaction. N-terminal L-methionine is a prerequisite for activity but the enzyme has broad specificity at other positions. This Streptococcus pyogenes serotype M49 (strain NZ131) protein is Peptide deformylase.